A 362-amino-acid polypeptide reads, in one-letter code: MTGKKSSREKRRKRSGQEAAAALAAPDLVPAVGGSGSGSTSGCGSASGCGSVTCCGNTSVSGSVTGGGSGGSCWGGSSVERGERRKRRSTDSSSSVSGSLQQEAKYLLPPLEKELFLAEHSDLEEGGLDLTVALKPVSFYISDKKEMLRQCFCIIGEKKLQKMLPDVLKNCSIEEIKRLCQEQLELLSEKKILKILEGDNGMDSEMEEEADDGSKMVSDVVNQQDSCVDSTSSLRENKQPEGLELKQGKGEDSDVLSINADAYDSDIEGPCNEEAAAPEVPENTVQSEAGQIDDLEKDIEKSVNEILGLAESSPKEPKAATLTVPPPEDVQPSAQQLELLELEMRARAIKALMKAGDIKKPA.

Basic residues predominate over residues 1-14 (MTGKKSSREKRRKR). Disordered stretches follow at residues 1–44 (MTGK…SGCG) and 65–101 (TGGG…GSLQ). Low complexity predominate over residues 19-32 (AAAALAAPDLVPAV). Composition is skewed to gly residues over residues 33–44 (GGSGSGSTSGCG) and 65–74 (TGGGSGGSCW). A Phosphoserine modification is found at Ser-89. At Thr-90 the chain carries Phosphothreonine. A Glycyl lysine isopeptide (Lys-Gly) (interchain with G-Cter in SUMO2) cross-link involves residue Lys-105. Residues Ser-121 and Ser-204 each carry the phosphoserine modification. Disordered stretches follow at residues 226–251 (SCVD…GKGE), 269–291 (GPCN…EAGQ), and 309–332 (LAES…DVQP). A compositionally biased stretch (basic and acidic residues) spans 235 to 251 (RENKQPEGLELKQGKGE). The span at 273–282 (EEAAAPEVPE) shows a compositional bias: low complexity. Residues 282–312 (ENTVQSEAGQIDDLEKDIEKSVNEILGLAES) adopt a coiled-coil conformation. A Phosphoserine modification is found at Ser-313.

Its function is as follows. Anti-apoptotic protein that modulates a caspase-10 dependent mitochondrial caspase-3/9 feedback amplification loop. This is Caspase activity and apoptosis inhibitor 1 (CAAP1) from Bos taurus (Bovine).